A 165-amino-acid chain; its full sequence is Short form salivary protein D7R1 (165 aa).

The N-terminal stretch at 1–21 (MFNKLHLVSLLACGLFVIAQA) is a signal peptide. 3 disulfide bridges follow: Cys27–Cys59, Cys40–Cys164, and Cys98–Cys117. Positions 28, 56, 115, 132, and 135 each coordinate serotonin. Residues Tyr115, Asp132, and Glu135 each coordinate histamine.

This sequence belongs to the PBP/GOBP family. Female salivary gland. Not detected in female carcass without salivary glands. Not detected in male tissues.

The protein resides in the secreted. Modulates blood feeding of female mosquitoes on vertebrate species by binding and sequestering different mediators involved in the host response. Binds serotonin and histamine. Increases blood clotting time. This chain is Short form salivary protein D7R1, found in Anopheles gambiae (African malaria mosquito).